A 734-amino-acid polypeptide reads, in one-letter code: Fc receptor-like protein 3 (734 aa).

The signal sequence occupies residues M1 to S17. The Extracellular portion of the chain corresponds to G18–T573. 6 Ig-like C2-type domains span residues P21–S98, P99–N182, P192–K270, P284–S369, P383–T470, and P476–T563. 6 disulfides stabilise this stretch: C44/C82, C120/C163, C211/C260, C309/C358, C404/C451, and C497/C544. A glycan (N-linked (GlcNAc...) asparagine) is linked at N561. The helical transmembrane segment at A574–L594 threads the bilayer. Over H595–H734 the chain is Cytoplasmic. The segment at P603–P655 is disordered. The span at A608 to P627 shows a compositional bias: polar residues. Basic and acidic residues predominate over residues S628 to H637. Short sequence motifs (ITIM motif) lie at residues P648–V653, P660–I665, V690–L695, and E720–V725. 4 positions are modified to phosphotyrosine: Y650, Y662, Y692, and Y722. Residues L695–H734 form a disordered region.

As to quaternary structure, interacts (via phosphorylated ITIM motifs) with phosphatases INPP5D, PTPN6 and PTPN11. Interacts (via ITIM motifs) SYK and ZAP70. Interacts with IZUMO1R/JUNO. Interacts (via extracellular domain) with IZUMO1; the interaction replaces IZUMO1R/JUNO as IZUMO1 receptor after adhesion between sperm and egg. Phosphorylated on cytoplasmic tyrosines; required for interaction with protein tyrosine phosphatases and protein tyrosine kinases. Primarily expressed in secondary lymphoid tissues by mature subsets of B-cells. Low expression on transitional B cells which increases to higher surface expression on mature and memory B-cells with innate-like features (at protein level). Expressed a low levels in naive and germinal center B-cells but also expressed in NK cells (at protein level). Expressed in unfertilized oocytes (at protein level). Expressed in a population of thymically derived naturally occurring regulatory T-cells that exhibits a memory phenotype, specialized in suppressing immune response to self-antigens. Detected in spleen, lymph node, peripheral blood lymphocytes, thymus, bone marrow, kidney, salivary gland, adrenal gland and uterus.

It localises to the cell membrane. The protein resides in the cell projection. Its subcellular location is the microvillus membrane. In terms of biological role, promotes TLR9-induced B-cell proliferation, activation and survival but inhibits antibody production and suppresses plasma cell differentiation. Enhances activation of NF-kappa-B and MAPK signaling pathways in TLR9 stimulated B-cells. Has inhibitory potentional on B-cell receptor (BCR)-mediated signaling, possibly through association with SH2 domain-containing phosphatases. Inhibits cell tyrosine phosphorylation, calcium mobilization and activation-induced cell death induced through BCR signaling. Regulatory T-cells expressing FCRL3 exhibit a memory phenotype, are relatively nonresponsive to antigenic stimulation in presence of IL2 and have reduced capacity to suppress the proliferation of effector T-cells. Acts as a human-specific epitope on the cell surface of oocytes (oolemma) and plays a role during sperm-egg adhesion and fusion. Interacts with the IZUMO1-IZUMO1R/JUNO sperm-egg complex and replaces IZUMO1R/JUNO as IZUMO1 receptor during fertilization, thereby permitting species-specific gamete fusion. The protein is Fc receptor-like protein 3 of Homo sapiens (Human).